A 264-amino-acid polypeptide reads, in one-letter code: tRNA (guanine-N(1)-)-methyltransferase (264 aa).

S-adenosyl-L-methionine-binding positions include Gly116 and 136 to 141; that span reads VGDFVL.

This sequence belongs to the RNA methyltransferase TrmD family. In terms of assembly, homodimer.

It is found in the cytoplasm. The enzyme catalyses guanosine(37) in tRNA + S-adenosyl-L-methionine = N(1)-methylguanosine(37) in tRNA + S-adenosyl-L-homocysteine + H(+). In terms of biological role, specifically methylates guanosine-37 in various tRNAs. In Koribacter versatilis (strain Ellin345), this protein is tRNA (guanine-N(1)-)-methyltransferase.